The primary structure comprises 227 residues: UPF0758 protein Pcryo_2119 (227 aa).

Residues 102 to 224 (GLGRSQMVKD…TLSYAENSLP (123 aa)) enclose the MPN domain. Positions 173, 175, and 186 each coordinate Zn(2+). The JAMM motif motif lies at 173–186 (HNHPHTDAKPSTAD).

It belongs to the UPF0758 family.

This Psychrobacter cryohalolentis (strain ATCC BAA-1226 / DSM 17306 / VKM B-2378 / K5) protein is UPF0758 protein Pcryo_2119.